Reading from the N-terminus, the 195-residue chain is 7-methyl-GTP pyrophosphatase (195 aa).

The active-site Proton acceptor is the D70.

This sequence belongs to the Maf family. YceF subfamily. Requires a divalent metal cation as cofactor.

The protein resides in the cytoplasm. The enzyme catalyses N(7)-methyl-GTP + H2O = N(7)-methyl-GMP + diphosphate + H(+). Its function is as follows. Nucleoside triphosphate pyrophosphatase that hydrolyzes 7-methyl-GTP (m(7)GTP). May have a dual role in cell division arrest and in preventing the incorporation of modified nucleotides into cellular nucleic acids. The polypeptide is 7-methyl-GTP pyrophosphatase (Shewanella sp. (strain MR-7)).